A 116-amino-acid chain; its full sequence is Cuticle protein AM1274 (116 aa).

Glutamine 1 carries the pyrrolidone carboxylic acid modification. Positions glutamine 1–asparagine 22 are disordered. Residues aspartate 20 to histidine 85 enclose the Chitin-binding type R&amp;R domain. Residue threonine 83 is glycosylated (O-linked (HexNAc) threonine).

As to expression, arthrodial membrane.

The protein is Cuticle protein AM1274 of Cancer pagurus (Rock crab).